The following is a 350-amino-acid chain: D-guloside 3-dehydrogenase (350 aa).

Belongs to the zinc-containing alcohol dehydrogenase family. Requires Zn(2+) as cofactor.

It catalyses the reaction a D-guloside + NAD(+) = a 3-dehydro-D-guloside + NADH + H(+). Functionally, catalyzes the NAD(+)-dependent oxidation of the hydroxyl group at C3 of D-gulosides leading to 3-dehydro-D-gulosides. Probably functions in a metabolic pathway that transforms D-gulosides to D-glucosides. Is also able to catalyze the reverse reactions, i.e. the NADH-dependent reduction of the oxo group at C3 of 3-dehydro-D-gulosides leading to D-gulosides. In vitro, can oxidize D-gulose and methyl beta-D-guloside, and reduce methyl alpha-3-dehydro-D-guloside and methyl beta-3-dehydro-D-guloside. However, the actual specific physiological substrates for this metabolic pathway are unknown. This chain is D-guloside 3-dehydrogenase (ycjQ), found in Shigella flexneri.